Consider the following 213-residue polypeptide: MKTSIAIVDYGMGNLRSVAQALMKAEPAADVKIVDRPEAIRAADRVVLPGQGAMPDCMRCLGESGLQEAVVEASRTKPLLGVCVGEQMLFDWSAEGDTKGLGLLPGKVVRFALEGRLQDDGSRFKVPQMGWNRVRQTQAHPLWDGVPDDAYFYFVHSYYVVPDNPAHTAGETLYGDVFTSAVARDNLFATQFHPEKSAEVGLRLYRNFVHWNP.

A Glutamine amidotransferase type-1 domain is found at 4-213 (SIAIVDYGMG…LYRNFVHWNP (210 aa)). The active-site Nucleophile is Cys-83. Active-site residues include His-193 and Glu-195.

Heterodimer of HisH and HisF.

It is found in the cytoplasm. The catalysed reaction is 5-[(5-phospho-1-deoxy-D-ribulos-1-ylimino)methylamino]-1-(5-phospho-beta-D-ribosyl)imidazole-4-carboxamide + L-glutamine = D-erythro-1-(imidazol-4-yl)glycerol 3-phosphate + 5-amino-1-(5-phospho-beta-D-ribosyl)imidazole-4-carboxamide + L-glutamate + H(+). It carries out the reaction L-glutamine + H2O = L-glutamate + NH4(+). It participates in amino-acid biosynthesis; L-histidine biosynthesis; L-histidine from 5-phospho-alpha-D-ribose 1-diphosphate: step 5/9. IGPS catalyzes the conversion of PRFAR and glutamine to IGP, AICAR and glutamate. The HisH subunit catalyzes the hydrolysis of glutamine to glutamate and ammonia as part of the synthesis of IGP and AICAR. The resulting ammonia molecule is channeled to the active site of HisF. The protein is Imidazole glycerol phosphate synthase subunit HisH of Burkholderia pseudomallei (strain K96243).